Consider the following 1007-residue polypeptide: Probable inorganic carbon transporter subunit DabA (1007 aa).

4 residues coordinate Zn(2+): Cys-442, Asp-444, His-696, and Cys-711.

It belongs to the inorganic carbon transporter (TC 9.A.2) DabA family. In terms of assembly, forms a complex with DabB. It depends on Zn(2+) as a cofactor.

The protein resides in the cell inner membrane. In terms of biological role, part of an energy-coupled inorganic carbon pump. This chain is Probable inorganic carbon transporter subunit DabA, found in Aquifex aeolicus (strain VF5).